A 175-amino-acid chain; its full sequence is Transcription factor E (175 aa).

The region spanning 8–90 is the HTH TFE/IIEalpha-type domain; that stretch reads NDPVIQKYLH…LWTFQYENIP (83 aa).

Belongs to the TFE family. Monomer. Interaction with RNA polymerase subunits RpoF and RpoE is necessary for Tfe stimulatory transcription activity. Able to interact with Tbp and RNA polymerase in the absence of DNA promoter. Interacts both with the preinitiation and elongation complexes.

Transcription factor that plays a role in the activation of archaeal genes transcribed by RNA polymerase. Facilitates transcription initiation by enhancing TATA-box recognition by TATA-box-binding protein (Tbp), and transcription factor B (Tfb) and RNA polymerase recruitment. Not absolutely required for transcription in vitro, but particularly important in cases where Tbp or Tfb function is not optimal. It dynamically alters the nucleic acid-binding properties of RNA polymerases by stabilizing the initiation complex and destabilizing elongation complexes. Seems to translocate with the RNA polymerase following initiation and acts by binding to the non template strand of the transcription bubble in elongation complexes. In Natronomonas pharaonis (strain ATCC 35678 / DSM 2160 / CIP 103997 / JCM 8858 / NBRC 14720 / NCIMB 2260 / Gabara) (Halobacterium pharaonis), this protein is Transcription factor E.